A 624-amino-acid polypeptide reads, in one-letter code: Acidic juvenile hormone-suppressible protein 1 (624 aa).

The N-terminal stretch at 1–18 (MARLVLCALALLVAGGLA) is a signal peptide. Residues Asn75 and Asn478 are each glycosylated (N-linked (GlcNAc...) asparagine).

Belongs to the hemocyanin family.

It is found in the secreted. It localises to the extracellular space. In Trichoplusia ni (Cabbage looper), this protein is Acidic juvenile hormone-suppressible protein 1 (AJSP-1).